The following is a 108-amino-acid chain: MNNLISKFNKIIYLNATKQTNKINCSFYSTTINNNNNNNNNNNNNNISNKKAEMSKENQQLLQDLEEEFDEDEFKPYVNPITKEIGGPKGPEPTRYNDWERNGRVSDF.

The segment covering 33-46 has biased composition (low complexity); the sequence is NNNNNNNNNNNNNN. Disordered regions lie at residues 33–59 and 79–108; these read NNNNNNNNNNNNNNISNKKAEMSKENQ and NPITKEIGGPKGPEPTRYNDWERNGRVSDF. Basic and acidic residues predominate over residues 95-108; it reads RYNDWERNGRVSDF.

Belongs to the SDHAF4 family. As to quaternary structure, interacts with SdhA in its FAD-bound form.

Its subcellular location is the mitochondrion matrix. Plays an essential role in the assembly of succinate dehydrogenase (SDH), an enzyme complex (also referred to as respiratory complex II) that is a component of both the tricarboxylic acid (TCA) cycle and the mitochondrial electron transport chain, and which couples the oxidation of succinate to fumarate with the reduction of ubiquinone (coenzyme Q) to ubiquinol. Binds to the flavoprotein subunit SdhA in its FAD-bound form, blocking the generation of excess reactive oxygen species (ROS) and facilitating its assembly with the iron-sulfur protein subunit SdhB into the SDH catalytic dimer. The chain is Succinate dehydrogenase assembly factor 4, mitochondrial from Dictyostelium discoideum (Social amoeba).